Reading from the N-terminus, the 381-residue chain is O-phospho-L-seryl-tRNA:Cys-tRNA synthase (381 aa).

Pyridoxal 5'-phosphate is bound by residues 86–87 (AR), Asn192, and 215–217 (SGH). An N6-(pyridoxal phosphate)lysine modification is found at Lys218.

The protein belongs to the SepCysS family. As to quaternary structure, homodimer. Interacts with SepRS. Pyridoxal 5'-phosphate serves as cofactor.

It catalyses the reaction O-phospho-L-seryl-tRNA(Cys) + hydrogen sulfide + H(+) = L-cysteinyl-tRNA(Cys) + phosphate. In terms of biological role, converts O-phospho-L-seryl-tRNA(Cys) (Sep-tRNA(Cys)) to L-cysteinyl-tRNA(Cys) (Cys-tRNA(Cys)). The polypeptide is O-phospho-L-seryl-tRNA:Cys-tRNA synthase (Methanococcus vannielii (strain ATCC 35089 / DSM 1224 / JCM 13029 / OCM 148 / SB)).